Consider the following 130-residue polypeptide: Albumin-1 B (130 aa).

Positions 1–26 (MASVKLASLMVLFATLGMFLTKNVGA) are cleaved as a signal peptide. Intrachain disulfides connect cysteine 29–cysteine 46, cysteine 33–cysteine 48, and cysteine 41–cysteine 58. Propeptides lie at residues 64–69 (VFLRTN) and 123–130 (LLKSVSTA).

The C-terminal glycine may be removed from PA1b. In terms of tissue distribution, major component of both the cotyledons and embryonic axes of mature seeds.

In terms of biological role, PA1b binds to basic 7S globulin (BG) and stimulates its phosphorylation activity. Involved in the signal transduction system to regulate the growth and differentiation as a hormone peptide. Toxic to various insects through binding to a high affinity binding site in the insect gut. This is Albumin-1 B from Pisum sativum (Garden pea).